The primary structure comprises 607 residues: ATP-dependent zinc metalloprotease FtsH 2 (607 aa).

The Cytoplasmic segment spans residues 1–2 (MR). A helical transmembrane segment spans residues 3-23 (SLWIVLVLVLGSALLLQVMAA). Residues 24-99 (SDDRIPYARF…PYTRVADELG (76 aa)) lie on the Periplasmic side of the membrane. The chain crosses the membrane as a helical span at residues 100 to 120 (LPPYLWLLLPLAGLAAMGHLA). Over 121 to 607 (SRRATTAGTI…LREMVASGEA (487 aa)) the chain is Cytoplasmic. 195-202 (GPPGTGKT) contributes to the ATP binding site. H418 contributes to the Zn(2+) binding site. E419 is a catalytic residue. Positions 422 and 495 each coordinate Zn(2+).

This sequence in the central section; belongs to the AAA ATPase family. The protein in the C-terminal section; belongs to the peptidase M41 family. Homohexamer. It depends on Zn(2+) as a cofactor.

The protein resides in the cell inner membrane. Acts as a processive, ATP-dependent zinc metallopeptidase for both cytoplasmic and membrane proteins. Plays a role in the quality control of integral membrane proteins. This Sorangium cellulosum (strain So ce56) (Polyangium cellulosum (strain So ce56)) protein is ATP-dependent zinc metalloprotease FtsH 2.